A 231-amino-acid chain; its full sequence is Isoprenyl transferase (231 aa).

Aspartate 14 is a catalytic residue. Aspartate 14 contacts Mg(2+). Residues glycine 15–arginine 18, tryptophan 19, arginine 27, histidine 31, and serine 59–glutamate 61 contribute to the substrate site. Asparagine 62 acts as the Proton acceptor in catalysis. Substrate-binding positions include tryptophan 63, arginine 65, arginine 176, and arginine 182–serine 184. Glutamate 195 is a binding site for Mg(2+).

It belongs to the UPP synthase family. In terms of assembly, homodimer. Requires Mg(2+) as cofactor.

In terms of biological role, catalyzes the condensation of isopentenyl diphosphate (IPP) with allylic pyrophosphates generating different type of terpenoids. This is Isoprenyl transferase from Aquifex aeolicus (strain VF5).